Here is a 511-residue protein sequence, read N- to C-terminus: Glucans biosynthesis protein G (511 aa).

The N-terminal stretch at 1-22 is a signal peptide; it reads MMKMRWLSAAVMLTLYTSSSWA.

The protein belongs to the OpgD/OpgG family.

The protein localises to the periplasm. It functions in the pathway glycan metabolism; osmoregulated periplasmic glucan (OPG) biosynthesis. Functionally, involved in the biosynthesis of osmoregulated periplasmic glucans (OPGs). In Shigella flexneri, this protein is Glucans biosynthesis protein G (mdoG).